Reading from the N-terminus, the 196-residue chain is Ribonuclease HII (196 aa).

The region spanning 9-196 is the RNase H type-2 domain; it reads RLVAGVDEVG…KPVRRALGIE (188 aa). Positions 15, 16, and 107 each coordinate a divalent metal cation.

The protein belongs to the RNase HII family. The cofactor is Mn(2+). Requires Mg(2+) as cofactor.

The protein localises to the cytoplasm. It carries out the reaction Endonucleolytic cleavage to 5'-phosphomonoester.. Functionally, endonuclease that specifically degrades the RNA of RNA-DNA hybrids. The protein is Ribonuclease HII of Aeromonas hydrophila subsp. hydrophila (strain ATCC 7966 / DSM 30187 / BCRC 13018 / CCUG 14551 / JCM 1027 / KCTC 2358 / NCIMB 9240 / NCTC 8049).